The primary structure comprises 217 residues: D-methionine transport system permease protein MetI (217 aa).

Over 1-19 (MSEAMMWLLVRGVWETLAM) the chain is Periplasmic. The region spanning 13-204 (VWETLAMTFV…LLVVLVYLIQ (192 aa)) is the ABC transmembrane type-1 domain. A helical transmembrane segment spans residues 20 to 40 (TFVSGFFGFVIGLPVGVLLYV). Residues 41–67 (TRPGQIMENARLYRSLSAVVNIFRSIP) lie on the Cytoplasmic side of the membrane. Residues 68-88 (FIILLVWMIPFTRIIVGTSIG) form a helical membrane-spanning segment. The Periplasmic portion of the chain corresponds to 89–92 (LQAA). The chain crosses the membrane as a helical span at residues 93–113 (IVPLTVGAAPFIARIVENALL). The Cytoplasmic portion of the chain corresponds to 114-151 (EIPAGLIEASRAMGATPLQIVRKILLPEALPGLVNAAT). The chain crosses the membrane as a helical span at residues 152–172 (ITLITLVGYSAMGGAVGAGGL). Over 173 to 185 (GQIGYQYGYIGYN) the chain is Periplasmic. The helical transmembrane segment at 186–206 (ATVMNTVLVLLVVLVYLIQLS) threads the bilayer. The Cytoplasmic segment spans residues 207 to 217 (GDRIVRAVTHK).

It belongs to the binding-protein-dependent transport system permease family. CysTW subfamily.

It localises to the cell inner membrane. Functionally, part of the binding-protein-dependent transport system for D-methionine and the toxic methionine analog alpha-methyl-methionine. Probably responsible for the translocation of the substrate across the membrane. In Salmonella typhi, this protein is D-methionine transport system permease protein MetI (metI).